The sequence spans 167 residues: Small ribosomal subunit protein uS5 (167 aa).

In terms of domain architecture, S5 DRBM spans 12–75; it reads LREKLITINR…ERARGGMRTV (64 aa).

It belongs to the universal ribosomal protein uS5 family. In terms of assembly, part of the 30S ribosomal subunit. Contacts proteins S4 and S8.

In terms of biological role, with S4 and S12 plays an important role in translational accuracy. Its function is as follows. Located at the back of the 30S subunit body where it stabilizes the conformation of the head with respect to the body. The polypeptide is Small ribosomal subunit protein uS5 (Halorhodospira halophila (strain DSM 244 / SL1) (Ectothiorhodospira halophila (strain DSM 244 / SL1))).